A 375-amino-acid chain; its full sequence is 23S rRNA (uracil(747)-C(5))-methyltransferase RlmC (375 aa).

Residues Cys-3, Cys-11, Cys-14, and Cys-87 each contribute to the [4Fe-4S] cluster site. S-adenosyl-L-methionine-binding residues include Gln-212, Phe-241, Glu-262, and Asn-307. The active-site Nucleophile is Cys-334.

Belongs to the class I-like SAM-binding methyltransferase superfamily. RNA M5U methyltransferase family. RlmC subfamily.

The catalysed reaction is uridine(747) in 23S rRNA + S-adenosyl-L-methionine = 5-methyluridine(747) in 23S rRNA + S-adenosyl-L-homocysteine + H(+). Its function is as follows. Catalyzes the formation of 5-methyl-uridine at position 747 (m5U747) in 23S rRNA. In Cronobacter sakazakii (strain ATCC BAA-894) (Enterobacter sakazakii), this protein is 23S rRNA (uracil(747)-C(5))-methyltransferase RlmC.